Consider the following 507-residue polypeptide: ATP synthase subunit alpha, mitochondrial (507 aa).

An ATP-binding site is contributed by 171 to 178; that stretch reads GDRQTGKT.

It belongs to the ATPase alpha/beta chains family. F-type ATPases have 2 components, CF(1) - the catalytic core - and CF(0) - the membrane proton channel. CF(1) has five subunits: alpha(3), beta(3), gamma(1), delta(1), epsilon(1). CF(0) has three main subunits: a, b and c.

Its subcellular location is the mitochondrion. The protein localises to the mitochondrion inner membrane. Its function is as follows. Mitochondrial membrane ATP synthase (F(1)F(0) ATP synthase or Complex V) produces ATP from ADP in the presence of a proton gradient across the membrane which is generated by electron transport complexes of the respiratory chain. F-type ATPases consist of two structural domains, F(1) - containing the extramembraneous catalytic core, and F(0) - containing the membrane proton channel, linked together by a central stalk and a peripheral stalk. During catalysis, ATP synthesis in the catalytic domain of F(1) is coupled via a rotary mechanism of the central stalk subunits to proton translocation. Subunits alpha and beta form the catalytic core in F(1). Rotation of the central stalk against the surrounding alpha(3)beta(3) subunits leads to hydrolysis of ATP in three separate catalytic sites on the beta subunits. Subunit alpha does not bear the catalytic high-affinity ATP-binding sites. This Brassica napus (Rape) protein is ATP synthase subunit alpha, mitochondrial (ATPA).